A 351-amino-acid chain; its full sequence is UDP-3-O-acylglucosamine N-acyltransferase (351 aa).

His240 (proton acceptor) is an active-site residue.

Belongs to the transferase hexapeptide repeat family. LpxD subfamily. Homotrimer.

It catalyses the reaction a UDP-3-O-[(3R)-3-hydroxyacyl]-alpha-D-glucosamine + a (3R)-hydroxyacyl-[ACP] = a UDP-2-N,3-O-bis[(3R)-3-hydroxyacyl]-alpha-D-glucosamine + holo-[ACP] + H(+). It functions in the pathway bacterial outer membrane biogenesis; LPS lipid A biosynthesis. Catalyzes the N-acylation of UDP-3-O-acylglucosamine using 3-hydroxyacyl-ACP as the acyl donor. Is involved in the biosynthesis of lipid A, a phosphorylated glycolipid that anchors the lipopolysaccharide to the outer membrane of the cell. The sequence is that of UDP-3-O-acylglucosamine N-acyltransferase from Pseudomonas fluorescens (strain Pf0-1).